Here is a 2219-residue protein sequence, read N- to C-terminus: RNA-directed RNA polymerase L (2219 aa).

The endonuclease stretch occupies residues 26–289 (KLAFLVQTEP…TTEDDVEYLI (264 aa)). Mn(2+) contacts are provided by E51, D89, and E102. K115 is a catalytic residue. A RdRp catalytic domain is found at 1177–1373 (LSMKLNVSLA…YMSDQLNKFV (197 aa)). D1335 serves as a coordination point for Mg(2+).

The protein belongs to the Bunyavirales RNA polymerase family. In terms of assembly, homomultimer; the oligomeric structure is essential for the polymerase activity. Interacts with nucleoprotein N. Interacts with protein Z; this interaction inhibits viral transcription and replication, Z partially blocks the product exit tunnel for the releasing nascent RNA product. The cofactor is Mn(2+). Mg(2+) is required as a cofactor.

The protein resides in the virion. It is found in the host cytoplasm. It carries out the reaction RNA(n) + a ribonucleoside 5'-triphosphate = RNA(n+1) + diphosphate. RNA-dependent RNA polymerase, which is responsible for the replication and transcription of the viral RNA genome using antigenomic RNA as an intermediate. During transcription, synthesizes subgenomic RNAs and assures their capping by a cap-snatching mechanism, which involves the endonuclease activity cleaving the host capped pre-mRNAs. These short capped RNAs are then used as primers for viral transcription. The 3'-end of subgenomic mRNAs molecules are heterogeneous and not polyadenylated. The replicase function is to direct synthesis of antigenomic and genomic RNA which are encapsidated and non capped. As a consequence of the use of the same enzyme for both transcription and replication, these mechanisms need to be well coordinated. These processes may be regulated by proteins N and Z in a dose-dependent manner. Z protein inhibits the viral polymerase L und thus the viral transcription and RNA synthesis. The chain is RNA-directed RNA polymerase L from Homo sapiens (Human).